A 411-amino-acid chain; its full sequence is Dual-specificity RNA methyltransferase RlmN (411 aa).

Glutamate 125 (proton acceptor) is an active-site residue. One can recognise a Radical SAM core domain in the interval 131–380 (EEGRGTLCIS…IRTPRGRDIL (250 aa)). Cysteine 138 and cysteine 383 are oxidised to a cystine. Residues cysteine 145, cysteine 149, and cysteine 152 each coordinate [4Fe-4S] cluster. S-adenosyl-L-methionine-binding positions include 209–210 (GE), serine 241, 263–265 (SLH), and asparagine 340. Cysteine 383 functions as the S-methylcysteine intermediate in the catalytic mechanism.

It belongs to the radical SAM superfamily. RlmN family. The cofactor is [4Fe-4S] cluster.

It localises to the cytoplasm. It catalyses the reaction adenosine(2503) in 23S rRNA + 2 reduced [2Fe-2S]-[ferredoxin] + 2 S-adenosyl-L-methionine = 2-methyladenosine(2503) in 23S rRNA + 5'-deoxyadenosine + L-methionine + 2 oxidized [2Fe-2S]-[ferredoxin] + S-adenosyl-L-homocysteine. The catalysed reaction is adenosine(37) in tRNA + 2 reduced [2Fe-2S]-[ferredoxin] + 2 S-adenosyl-L-methionine = 2-methyladenosine(37) in tRNA + 5'-deoxyadenosine + L-methionine + 2 oxidized [2Fe-2S]-[ferredoxin] + S-adenosyl-L-homocysteine. Specifically methylates position 2 of adenine 2503 in 23S rRNA and position 2 of adenine 37 in tRNAs. m2A2503 modification seems to play a crucial role in the proofreading step occurring at the peptidyl transferase center and thus would serve to optimize ribosomal fidelity. The sequence is that of Dual-specificity RNA methyltransferase RlmN from Brucella melitensis biotype 2 (strain ATCC 23457).